A 91-amino-acid chain; its full sequence is C-C motif chemokine 5 (91 aa).

Positions 1 to 23 are cleaved as a signal peptide; the sequence is MKISAAALTIILTAAALCTPAPA. Disulfide bonds link cysteine 33–cysteine 57 and cysteine 34–cysteine 73.

It belongs to the intercrine beta (chemokine CC) family. In terms of tissue distribution, T-cell and macrophage specific.

The protein resides in the secreted. Its function is as follows. Chemoattractant for blood monocytes, memory T-helper cells and eosinophils. Causes the release of histamine from basophils and activates eosinophils. May activate several chemokine receptors including CCR1, CCR3, CCR4 and CCR5. May also be an agonist of the G protein-coupled receptor GPR75. Together with GPR75, may play a role in neuron survival through activation of a downstream signaling pathway involving the PI3, Akt and MAP kinases. By activating GPR75 may also play a role in insulin secretion by islet cells. This Mus musculus (Mouse) protein is C-C motif chemokine 5 (Ccl5).